Consider the following 259-residue polypeptide: Global transcriptional regulator CodY (259 aa).

Positions 1 to 155 (MNLLQKTRKI…GATVVGMEIL (155 aa)) are GAF domain. Residues 203-222 (ASKIADRVGITRSVIVNALR) constitute a DNA-binding region (H-T-H motif). S215 carries the phosphoserine modification.

Belongs to the CodY family.

The protein localises to the cytoplasm. Its function is as follows. DNA-binding global transcriptional regulator which is involved in the adaptive response to starvation and acts by directly or indirectly controlling the expression of numerous genes in response to nutrient availability. During rapid exponential growth, CodY is highly active and represses genes whose products allow adaptation to nutrient depletion. The polypeptide is Global transcriptional regulator CodY (Geobacillus sp. (strain WCH70)).